A 442-amino-acid polypeptide reads, in one-letter code: 3-phosphoshikimate 1-carboxyvinyltransferase (442 aa).

Residues lysine 27, serine 28, and arginine 32 each contribute to the 3-phosphoshikimate site. Residue lysine 27 coordinates phosphoenolpyruvate. 2 residues coordinate phosphoenolpyruvate: glycine 100 and arginine 128. Serine 174, serine 175, glutamine 176, serine 204, aspartate 321, and lysine 348 together coordinate 3-phosphoshikimate. Residue glutamine 176 participates in phosphoenolpyruvate binding. Aspartate 321 serves as the catalytic Proton acceptor. Arginine 352, arginine 394, and lysine 424 together coordinate phosphoenolpyruvate.

Belongs to the EPSP synthase family. Monomer.

The protein localises to the cytoplasm. It catalyses the reaction 3-phosphoshikimate + phosphoenolpyruvate = 5-O-(1-carboxyvinyl)-3-phosphoshikimate + phosphate. It functions in the pathway metabolic intermediate biosynthesis; chorismate biosynthesis; chorismate from D-erythrose 4-phosphate and phosphoenolpyruvate: step 6/7. Functionally, catalyzes the transfer of the enolpyruvyl moiety of phosphoenolpyruvate (PEP) to the 5-hydroxyl of shikimate-3-phosphate (S3P) to produce enolpyruvyl shikimate-3-phosphate and inorganic phosphate. This chain is 3-phosphoshikimate 1-carboxyvinyltransferase, found in Herminiimonas arsenicoxydans.